Here is a 104-residue protein sequence, read N- to C-terminus: DNA-directed RNA polymerase subunit Rpo13 (104 aa).

Disordered stretches follow at residues M1 to F33 and R78 to G104. The segment covering T7–D31 has biased composition (acidic residues). Over residues S80–G104 the composition is skewed to basic residues.

This sequence belongs to the archaeal Rpo13 RNA polymerase subunit family. As to quaternary structure, part of the 13-subunit RNA polymerase complex.

It is found in the cytoplasm. It catalyses the reaction RNA(n) + a ribonucleoside 5'-triphosphate = RNA(n+1) + diphosphate. Its function is as follows. DNA-dependent RNA polymerase (RNAP) catalyzes the transcription of DNA into RNA using the four ribonucleoside triphosphates as substrates. Probably binds dsDNA. In Saccharolobus solfataricus (strain ATCC 35092 / DSM 1617 / JCM 11322 / P2) (Sulfolobus solfataricus), this protein is DNA-directed RNA polymerase subunit Rpo13.